Here is a 318-residue protein sequence, read N- to C-terminus: Death effector domain-containing protein (318 aa).

The DED domain occupies 25–103 (SLHRMFDIVG…RHDLLPYVTL (79 aa)). Disordered stretches follow at residues 128–147 (PRAL…TVPP) and 160–191 (QMCS…KEKQ).

Interacts with CASP8, CASP10, KRT8, KRT18, CASP3 and FADD. Homodimerizes and heterodimerizes with DEDD2. Post-translationally, exists predominantly in a mono- or diubiquitinated form. In terms of tissue distribution, widely expressed with highest levels in testis.

It localises to the cytoplasm. It is found in the nucleus. The protein resides in the nucleolus. Functionally, a scaffold protein that directs CASP3 to certain substrates and facilitates their ordered degradation during apoptosis. May also play a role in mediating CASP3 cleavage of KRT18. Regulates degradation of intermediate filaments during apoptosis. May play a role in the general transcription machinery in the nucleus and might be an important regulator of the activity of GTF3C3. Inhibits DNA transcription in vitro. The sequence is that of Death effector domain-containing protein (DEDD) from Homo sapiens (Human).